The sequence spans 211 residues: Arginine exporter protein ArgO (211 aa).

Transmembrane regions (helical) follow at residues 1–21 (MLSY…PLGP), 37–57 (LMIA…GIFG), 68–88 (LLAL…FGAL), 111–131 (IIAT…DTFV), 147–167 (WFAL…ALLA), and 186–206 (LVGL…IHHI).

This sequence belongs to the LysE/ArgO transporter (TC 2.A.75) family.

Its subcellular location is the cell inner membrane. The catalysed reaction is L-arginine(in) = L-arginine(out). Functionally, involved in the export of arginine. Important to control the intracellular level of arginine and the correct balance between arginine and lysine. This chain is Arginine exporter protein ArgO, found in Enterobacter sp. (strain 638).